Here is a 600-residue protein sequence, read N- to C-terminus: Elongation factor 4 (600 aa).

Positions 5–187 constitute a tr-type G domain; the sequence is KYIRNFSIIA…AIVNKLPPPK (183 aa). GTP is bound by residues 17-22 and 134-137; these read DHGKST and NKID.

The protein belongs to the TRAFAC class translation factor GTPase superfamily. Classic translation factor GTPase family. LepA subfamily.

It localises to the cell inner membrane. The enzyme catalyses GTP + H2O = GDP + phosphate + H(+). Functionally, required for accurate and efficient protein synthesis under certain stress conditions. May act as a fidelity factor of the translation reaction, by catalyzing a one-codon backward translocation of tRNAs on improperly translocated ribosomes. Back-translocation proceeds from a post-translocation (POST) complex to a pre-translocation (PRE) complex, thus giving elongation factor G a second chance to translocate the tRNAs correctly. Binds to ribosomes in a GTP-dependent manner. The protein is Elongation factor 4 of Rickettsia felis (strain ATCC VR-1525 / URRWXCal2) (Rickettsia azadi).